We begin with the raw amino-acid sequence, 135 residues long: Fluoride-specific ion channel FluC 2 (135 aa).

Transmembrane regions (helical) follow at residues 5 to 25 (VLAA…GLLA), 36 to 56 (WGTV…METL), 68 to 88 (PFLG…ITDA), and 100 to 120 (ALLA…AAAG). Positions 76 and 79 each coordinate Na(+).

It belongs to the fluoride channel Fluc/FEX (TC 1.A.43) family.

It is found in the cell membrane. It carries out the reaction fluoride(in) = fluoride(out). Na(+) is not transported, but it plays an essential structural role and its presence is essential for fluoride channel function. In terms of biological role, fluoride-specific ion channel. Important for reducing fluoride concentration in the cell, thus reducing its toxicity. This is Fluoride-specific ion channel FluC 2 from Thermobifida fusca (strain YX).